The sequence spans 225 residues: MNPLAPVLTIDGPSGAGKGTISRIVARRMGWHYLDSGALYRAVGVAASWADIDTSDASALVRCTFDTHVQFVEQGEAMRVMVNGTDATDELRLETTGALASAIAAIPEVRAALKERQRAFRELPGLVADGRDMGTVIFPDASYKVFLTASAEERAERRHKQLKDKGVSVNFDDLLREIMARDARDAQRTVAPLKPADDAVLIDTTGIGIDDVVARVMDLLPVPAA.

12-20 lines the ATP pocket; the sequence is GPSGAGKGT.

The protein belongs to the cytidylate kinase family. Type 1 subfamily.

It is found in the cytoplasm. The enzyme catalyses CMP + ATP = CDP + ADP. It carries out the reaction dCMP + ATP = dCDP + ADP. The sequence is that of Cytidylate kinase from Stenotrophomonas maltophilia (strain R551-3).